The chain runs to 188 residues: Elongation factor P (188 aa).

Position 34 is an N6-(3,6-diaminohexanoyl)-5-hydroxylysine (K34).

It belongs to the elongation factor P family. May be beta-lysylated on the epsilon-amino group of Lys-34 by the combined action of EpmA and EpmB, and then hydroxylated on the C5 position of the same residue by EpmC (if this protein is present). Lysylation is critical for the stimulatory effect of EF-P on peptide-bond formation. The lysylation moiety may extend toward the peptidyltransferase center and stabilize the terminal 3-CCA end of the tRNA. Hydroxylation of the C5 position on Lys-34 may allow additional potential stabilizing hydrogen-bond interactions with the P-tRNA.

It is found in the cytoplasm. The protein operates within protein biosynthesis; polypeptide chain elongation. Its function is as follows. Involved in peptide bond synthesis. Alleviates ribosome stalling that occurs when 3 or more consecutive Pro residues or the sequence PPG is present in a protein, possibly by augmenting the peptidyl transferase activity of the ribosome. Modification of Lys-34 is required for alleviation. This Actinobacillus succinogenes (strain ATCC 55618 / DSM 22257 / CCUG 43843 / 130Z) protein is Elongation factor P.